We begin with the raw amino-acid sequence, 718 residues long: Probable protein S-acyltransferase 19 (718 aa).

2 helical membrane-spanning segments follow: residues 16-36 and 41-61; these read VVAI…FAPF and IWEY…FVLY. The segment at 100 to 125 is disordered; the sequence is ETGSHLQSSPSVASRTSTLPNSSVKG. Over residues 103–124 the composition is skewed to polar residues; that stretch reads SHLQSSPSVASRTSTLPNSSVK. In terms of domain architecture, DHHC spans 174–224; the sequence is LFCTLCNAEVRKFSKHCRSCDKCVDCFDHHCRWLNNCVGRKNYMTFISLMA. The S-palmitoyl cysteine intermediate role is filled by cysteine 204. 2 consecutive transmembrane segments (helical) span residues 222-242 and 277-297; these read LMAV…AVIV and AVSM…MLLI. Disordered stretches follow at residues 454–511, 598–649, and 664–718; these read SSVS…HVHE, PATT…QQQQ, and GPLV…GTRK. Polar residues-rich tracts occupy residues 479-488 and 598-626; these read CRNSYAPSQG and PATT…TQNP. Over residues 673 to 687 the composition is skewed to basic and acidic residues; the sequence is DGLRHDGDSGREGQD.

The protein belongs to the DHHC palmitoyltransferase family.

It localises to the cell membrane. It carries out the reaction L-cysteinyl-[protein] + hexadecanoyl-CoA = S-hexadecanoyl-L-cysteinyl-[protein] + CoA. In terms of biological role, palmitoyl acyltransferase. The polypeptide is Probable protein S-acyltransferase 19 (PAT19) (Arabidopsis thaliana (Mouse-ear cress)).